The primary structure comprises 272 residues: F-box protein PP2-B10 (272 aa).

One can recognise an F-box domain in the interval 11–57 (SSPFDSFPEDCISYIISFTNPRDACVAATVSKTFESTVKSDIIWEKF).

As to quaternary structure, part of a SCF (ASK-cullin-F-box) protein ligase complex. Interacts with SKP1B/ASK2, ASK11 and ASK12.

It participates in protein modification; protein ubiquitination. In terms of biological role, component of SCF(ASK-cullin-F-box) E3 ubiquitin ligase complexes, which may mediate the ubiquitination and subsequent proteasomal degradation of target proteins. The protein is F-box protein PP2-B10 (PP2B10) of Arabidopsis thaliana (Mouse-ear cress).